The chain runs to 760 residues: General transcription and DNA repair factor IIH helicase subunit XPD (760 aa).

Positions 7–283 constitute a Helicase ATP-binding domain; the sequence is GLLVYFPYDY…KETDEQRLRE (277 aa). 42–49 lines the ATP pocket; the sequence is MPSGTGKT. [4Fe-4S] cluster is bound by residues Cys-116, Cys-134, Cys-155, and Cys-190. A DEAH box motif is present at residues 234 to 237; that stretch reads DEAH. Residues 438 to 637 are mediates interaction with MMS19; it reads MDASLAIKPV…TQSRILKARL (200 aa). The Nuclear localization signal motif lies at 682–695; the sequence is KRFARADKRGKLPR.

The protein belongs to the helicase family. RAD3/XPD subfamily. In terms of assembly, component of the 7-subunit TFIIH core complex composed of XPB/ERCC3, XPD/ERCC2, GTF2H1, GTF2H2, GTF2H3, GTF2H4 and GTF2H5, which is active in NER. The core complex associates with the 3-subunit CDK-activating kinase (CAK) module composed of CCNH/cyclin H, CDK7 and MNAT1 to form the 10-subunit holoenzyme (holo-TFIIH) active in transcription. The interaction with GTF2H2 results in the stimulation of the 5'--&gt;3' helicase activity. Component of the MMXD complex, which includes CIAO1, ERCC2, CIAO2B, MMS19 and SLC25A5. Interacts with CIAO1 and CIAO2B; the interaction WITH CIAO2B is direct. Interacts with ATF7IP. Interacts directly with MMS19. Part of TBP-based Pol II pre-initiation complex (PIC), in which Pol II core assembles with general transcription factors and other specific initiation factors including GTF2E1, GTF2E2, GTF2F1, GTF2F2, TCEA1, ERCC2, ERCC3, GTF2H2, GTF2H3, GTF2H4, GTF2H5, GTF2A1, GTF2A2, GTF2B and TBP; this large multi-subunit PIC complex mediates DNA unwinding and targets Pol II core to the transcription start site where the first phosphodiester bond forms. Mg(2+) serves as cofactor. The cofactor is [4Fe-4S] cluster. ISGylated.

It is found in the nucleus. Its subcellular location is the cytoplasm. The protein localises to the cytoskeleton. It localises to the spindle. The catalysed reaction is Couples ATP hydrolysis with the unwinding of duplex DNA at the replication fork by translocating in the 5'-3' direction. This creates two antiparallel DNA single strands (ssDNA). The leading ssDNA polymer is the template for DNA polymerase III holoenzyme which synthesizes a continuous strand.. It catalyses the reaction ATP + H2O = ADP + phosphate + H(+). Its function is as follows. ATP-dependent 5'-3' DNA helicase, component of the general transcription and DNA repair factor IIH (TFIIH) core complex, which is involved in general and transcription-coupled nucleotide excision repair (NER) of damaged DNA and, when complexed to CDK-activating kinase (CAK), involved in transcription by RNA polymerase II. In NER, TFIIH acts by opening DNA around the lesion to allow the excision of the damaged oligonucleotide and its replacement by a new DNA fragment. The ATP-dependent helicase activity of XPD/ERCC2 is required for DNA opening. In transcription, TFIIH has an essential role in transcription initiation. When the pre-initiation complex (PIC) has been established, TFIIH is required for promoter opening and promoter escape. Phosphorylation of the C-terminal tail (CTD) of the largest subunit of RNA polymerase II by the kinase module CAK controls the initiation of transcription. XPD/ERCC2 acts by forming a bridge between CAK and the core-TFIIH complex. Involved in the regulation of vitamin-D receptor activity. As part of the mitotic spindle-associated MMXD complex it plays a role in chromosome segregation. Might have a role in aging process and could play a causative role in the generation of skin cancers. The chain is General transcription and DNA repair factor IIH helicase subunit XPD (ERCC2) from Bos taurus (Bovine).